We begin with the raw amino-acid sequence, 321 residues long: Lipoyl synthase (321 aa).

Residues C68, C73, C79, C94, C98, C101, and S308 each coordinate [4Fe-4S] cluster. In terms of domain architecture, Radical SAM core spans 80–297 (FNHGTATFMI…KEIALELGFT (218 aa)).

This sequence belongs to the radical SAM superfamily. Lipoyl synthase family. [4Fe-4S] cluster serves as cofactor.

It is found in the cytoplasm. It catalyses the reaction [[Fe-S] cluster scaffold protein carrying a second [4Fe-4S](2+) cluster] + N(6)-octanoyl-L-lysyl-[protein] + 2 oxidized [2Fe-2S]-[ferredoxin] + 2 S-adenosyl-L-methionine + 4 H(+) = [[Fe-S] cluster scaffold protein] + N(6)-[(R)-dihydrolipoyl]-L-lysyl-[protein] + 4 Fe(3+) + 2 hydrogen sulfide + 2 5'-deoxyadenosine + 2 L-methionine + 2 reduced [2Fe-2S]-[ferredoxin]. The protein operates within protein modification; protein lipoylation via endogenous pathway; protein N(6)-(lipoyl)lysine from octanoyl-[acyl-carrier-protein]: step 2/2. In terms of biological role, catalyzes the radical-mediated insertion of two sulfur atoms into the C-6 and C-8 positions of the octanoyl moiety bound to the lipoyl domains of lipoate-dependent enzymes, thereby converting the octanoylated domains into lipoylated derivatives. This Vibrio vulnificus (strain CMCP6) protein is Lipoyl synthase.